A 260-amino-acid polypeptide reads, in one-letter code: Hydroxyethylthiazole kinase 1 (260 aa).

M39 contacts substrate. ATP is bound by residues R115 and T160. G187 is a substrate binding site.

The protein belongs to the Thz kinase family. Mg(2+) serves as cofactor.

The catalysed reaction is 5-(2-hydroxyethyl)-4-methylthiazole + ATP = 4-methyl-5-(2-phosphooxyethyl)-thiazole + ADP + H(+). It participates in cofactor biosynthesis; thiamine diphosphate biosynthesis; 4-methyl-5-(2-phosphoethyl)-thiazole from 5-(2-hydroxyethyl)-4-methylthiazole: step 1/1. In terms of biological role, catalyzes the phosphorylation of the hydroxyl group of 4-methyl-5-beta-hydroxyethylthiazole (THZ). In Streptococcus pneumoniae (strain P1031), this protein is Hydroxyethylthiazole kinase 1.